The primary structure comprises 419 residues: Menaquinone reductase, integral membrane subunit (419 aa).

The next 10 helical transmembrane spans lie at 23 to 43 (LSKF…GLYA), 61 to 81 (FGFG…AGAF), 98 to 118 (IINL…LVLV), 143 to 163 (VIFC…PLIL), 176 to 196 (AVAH…AFLS), 221 to 241 (FFIW…SGPV), 270 to 290 (IAGT…YAWA), 316 to 336 (LWAE…VPAL), 341 to 361 (VLFY…RYVM), and 383 to 403 (WAEW…LSLS).

This sequence belongs to the NrfD family. As to quaternary structure, the Qrc complex is composed of four subunits: QrcA, QrcB, QrcC and QrcD. Can form a supercomplex with the [NiFe] hydrogenase HynA1 and the tetraheme Type I cytochrome c3 TpIc(3), its physiological electron donors.

The protein resides in the cell inner membrane. In terms of biological role, component of the respiratory Qrc complex, that catalyzes the reduction of the menaquinone pool using electrons transferred from the reduced periplasmic cytochrome c3, and which is probably involved in sulfate respiration. Is likely essential for growth on H(2) or formate since the periplasmic hydrogenases and/or formate dehydrogenases act as primary electron donors for the Qrc complex. The QrcD subunit anchors the protein complex to the membrane and likely interacts with the quinone pool. The chain is Menaquinone reductase, integral membrane subunit from Nitratidesulfovibrio vulgaris (strain ATCC 29579 / DSM 644 / CCUG 34227 / NCIMB 8303 / VKM B-1760 / Hildenborough) (Desulfovibrio vulgaris).